The sequence spans 194 residues: Threonylcarbamoyl-AMP synthase (194 aa).

The YrdC-like domain occupies 11-194 (FRNLMKIINA…GINYKIIRKG (184 aa)).

It belongs to the SUA5 family. TsaC subfamily.

It is found in the cytoplasm. The enzyme catalyses L-threonine + hydrogencarbonate + ATP = L-threonylcarbamoyladenylate + diphosphate + H2O. Required for the formation of a threonylcarbamoyl group on adenosine at position 37 (t(6)A37) in tRNAs that read codons beginning with adenine. Catalyzes the conversion of L-threonine, HCO(3)(-)/CO(2) and ATP to give threonylcarbamoyl-AMP (TC-AMP) as the acyladenylate intermediate, with the release of diphosphate. This Wigglesworthia glossinidia brevipalpis protein is Threonylcarbamoyl-AMP synthase.